Consider the following 211-residue polypeptide: Putative hydrolase SMU_367 (211 aa).

Positions 1–29 are cleaved as a signal peptide; it reads MKKQFLEKAVFTVAATAATVVLGNKMADA. The 45-residue stretch at 30 to 74 folds into the LysM domain; the sequence is DTYTLQEGDSFFSVAQRYHMDAYELASMNGKDITSLILPGQTLTV. The interval 77–101 is disordered; it reads SAAPDNQAAAPTDTTQATTETNDAN. Residues 78 to 101 are compositionally biased toward low complexity; it reads AAPDNQAAAPTDTTQATTETNDAN. The region spanning 85 to 209 is the Peptidase C51 domain; it reads AAPTDTTQAT…GTPGSVSYIY (125 aa).

This chain is Putative hydrolase SMU_367, found in Streptococcus mutans serotype c (strain ATCC 700610 / UA159).